Here is a 1588-residue protein sequence, read N- to C-terminus: Autotransporter adhesin EhaG (1588 aa).

Residues 1–53 form the signal peptide; sequence MNKIFKVIWNPATGNYTVTSETAKSRGKKSGRSKLLISALVAGGMLSSFGALA. Positions 54-1499 are surface exposed passenger domain; the sequence is NAGNDNGQGV…QETKQYTDQR (1446 aa). Residues 1500-1588 are translocator domain; it reads MVEMDNKLSK…SAALGAGIQW (89 aa). Beta stranded transmembrane passes span 1534 to 1544, 1548 to 1558, 1567 to 1573, and 1577 to 1588; these read GASMASIGGGT, ESAVALGVSMV, KLQGSTN, and EYSAALGAGIQW.

The protein belongs to the autotransporter-2 (AT-2) (TC 1.B.40) family. In terms of assembly, homotrimer.

The protein resides in the cell surface. It localises to the cell outer membrane. In terms of biological role, mediates aggregation, biofilm formation and adhesion to a range of extracellular matrix (ECM) proteins, such as fibronectin, fibrinogen, laminin and collagen types I, II, III, and V. Mediates adhesion to intestinal epithelial cells. This chain is Autotransporter adhesin EhaG, found in Escherichia coli O157:H7.